The following is a 336-amino-acid chain: MEKLTNVQAQQEEEEEEGPLSVTKLIGGSITAKDIKLLQQASLHTVESVANATKKQLMAIPGLGGGKVEQIITEANKLVPLGFLSARTFYQMRADVVQLSTGSKELDKLLGGGIETGSITEIFGEFRCGKTQLCHTLAVTCQLPISQKGGEGKCMYIDTENTFRPERLAAIAQRYKLNESEVLDNVAFTRAHNSDQQTKLIQMAAGMLFESRYALLIVDSAMALYRSDYIGRGELAARQNHLGLFLRMLQRLADEFGVAVVITNQVTASLDGAPGMFDAKKPIGGHIMAHSSTTRLYLRKGKGETRICKIYDSPCLPESEAMFAILPDGIGDARES.

Residues 1-10 show a composition bias toward polar residues; sequence MEKLTNVQAQ. The segment at 1 to 20 is disordered; sequence MEKLTNVQAQQEEEEEEGPL. ATP is bound at residue 124–131; the sequence is GEFRCGKT.

The protein belongs to the RecA family. RAD51 subfamily. In terms of assembly, interacts with Rrp6; the interaction is required for the recruitment of spn-A to the DNA-damage response foci. Highly expressed in ovaries.

The protein resides in the nucleus. The protein localises to the cytoplasm. Functionally, plays an important role in homologous strand exchange, a key step in DNA repair through homologous recombination (HR). Binds to single and double-stranded DNA and exhibits DNA-dependent ATPase activity. Underwinds duplex DNA. Spindle genes are required for each of the symmetry-breaking steps that generate polarity during egg axis formation; oocyte positioning at the posterior of the cyst to generate the first AP polarity and inhibition of gurken (grk) signaling to the follicle cell layer to polarize first the AP axis and then DV axis. May have a role in female meiosis. This is DNA repair protein Rad51 homolog (spn-A) from Drosophila melanogaster (Fruit fly).